The chain runs to 665 residues: Ribonuclease R 2 (665 aa).

Residues 202–528 (REDYRNEITY…LIIHRLLHLY (327 aa)) enclose the RNB domain. The 84-residue stretch at 579 to 662 (GEVYTGTITG…RKGTVDFEQI (84 aa)) folds into the S1 motif domain.

It belongs to the RNR ribonuclease family. RNase R subfamily.

It is found in the cytoplasm. It catalyses the reaction Exonucleolytic cleavage in the 3'- to 5'-direction to yield nucleoside 5'-phosphates.. Functionally, 3'-5' exoribonuclease that releases 5'-nucleoside monophosphates and is involved in maturation of structured RNAs. This is Ribonuclease R 2 from Lactococcus lactis subsp. lactis (strain IL1403) (Streptococcus lactis).